We begin with the raw amino-acid sequence, 661 residues long: uncharacterized protein (661 aa).

The next 16 membrane-spanning stretches (helical) occupy residues 27 to 47 (LAIG…VSGA), 68 to 88 (VGFF…IHVV), 116 to 136 (LWLG…TGVG), 150 to 170 (VAAS…LVVA), 179 to 199 (WLGH…TAVT), 214 to 234 (AAIV…AAAL), 251 to 271 (GALA…GWAV), 279 to 299 (GLLA…RLLV), 313 to 333 (GAAL…VMTA), 369 to 389 (SLIG…FAAL), 396 to 416 (WPVG…FTSG), 435 to 455 (MTLN…TLAL), 488 to 508 (PITA…TPLF), 519 to 539 (EFMA…IIGI), 552 to 572 (IGLL…LMTM), and 599 to 619 (GGGI…VALV).

To M.leprae ML1998.

It is found in the cell membrane. This is an uncharacterized protein from Mycobacterium tuberculosis (strain CDC 1551 / Oshkosh).